The primary structure comprises 41 residues: Photosystem I reaction center subunit IX (41 aa).

A helical membrane pass occupies residues 7-27 (YLSTAPVITAIWLGITAGILI).

Belongs to the PsaJ family.

The protein resides in the cellular thylakoid membrane. Functionally, may help in the organization of the PsaE and PsaF subunits. This Cyanothece sp. (strain PCC 7425 / ATCC 29141) protein is Photosystem I reaction center subunit IX.